The chain runs to 512 residues: Maturase K (512 aa).

The protein belongs to the intron maturase 2 family. MatK subfamily.

It is found in the plastid. It localises to the chloroplast. Functionally, usually encoded in the trnK tRNA gene intron. Probably assists in splicing its own and other chloroplast group II introns. The sequence is that of Maturase K from Alisma canaliculatum (Water plantain).